Here is a 344-residue protein sequence, read N- to C-terminus: Dihydroorotase (344 aa).

The Zn(2+) site is built by histidine 13 and histidine 15. Residues 15 to 17 (HLR) and asparagine 41 contribute to the substrate site. Residues lysine 99, histidine 136, and histidine 174 each coordinate Zn(2+). N6-carboxylysine is present on lysine 99. Histidine 136 contacts substrate. Leucine 219 provides a ligand contact to substrate. Residue aspartate 247 coordinates Zn(2+). Aspartate 247 is a catalytic residue. Substrate contacts are provided by histidine 251 and alanine 263.

It belongs to the metallo-dependent hydrolases superfamily. DHOase family. Class II DHOase subfamily. As to quaternary structure, homodimer. Zn(2+) is required as a cofactor.

It catalyses the reaction (S)-dihydroorotate + H2O = N-carbamoyl-L-aspartate + H(+). It functions in the pathway pyrimidine metabolism; UMP biosynthesis via de novo pathway; (S)-dihydroorotate from bicarbonate: step 3/3. Catalyzes the reversible cyclization of carbamoyl aspartate to dihydroorotate. The chain is Dihydroorotase from Shewanella denitrificans (strain OS217 / ATCC BAA-1090 / DSM 15013).